A 747-amino-acid polypeptide reads, in one-letter code: Polyribonucleotide nucleotidyltransferase (747 aa).

2 residues coordinate Mg(2+): aspartate 487 and aspartate 493. A KH domain is found at 554–613; sequence PSTTTIKIDKDKIRDVIGPGGKVIKEICETSDAKIDISDDGTVSVYASDRDKLKVALDKI. The 69-residue stretch at 623 to 691 folds into the S1 motif domain; that stretch reads GEIFNGTVMK…NKGKAKLTIK (69 aa). Residues 691–747 form a disordered region; that stretch reads KNADKDKSSNNPKQKNNVNNSKENSEPERRDSSKKRAWNEDNNSDTTEVITERKYFN. Positions 699-712 are enriched in low complexity; sequence SNNPKQKNNVNNSK. Polar residues predominate over residues 730–739; it reads EDNNSDTTEV.

The protein belongs to the polyribonucleotide nucleotidyltransferase family. Mg(2+) is required as a cofactor.

The protein resides in the cytoplasm. It catalyses the reaction RNA(n+1) + phosphate = RNA(n) + a ribonucleoside 5'-diphosphate. Its function is as follows. Involved in mRNA degradation. Catalyzes the phosphorolysis of single-stranded polyribonucleotides processively in the 3'- to 5'-direction. This chain is Polyribonucleotide nucleotidyltransferase, found in Rickettsia akari (strain Hartford).